The chain runs to 440 residues: KH domain-containing protein 3 (440 aa).

Residues M1–E39 are involved in RNA binding. The KH; atypical domain occupies D40–A118. Positions K132–A201 are disordered. S151 is subject to Phosphoserine; by ATR. Phosphothreonine occurs at positions 274 and 286. Positions V341–L440 are required for interaction with NUMA1 and regulation of apoptosis in response to DNA damage. Residue S349 is modified to Phosphoserine.

Belongs to the KHDC1 family. As to quaternary structure, component of the subcortical maternal complex (SCMC), at least composed of NLRP5, KHDC3, OOEP, and TLE6. Within the complex, interacts with NLRP5, OOEP and TLE6. The SCMC may facilitate translocation of its components between the nuclear and cytoplasmic compartments. Forms a scaffold complex with OOEP/FLOPED, and interacts with BLM and TRIM25 at DNA replication forks. Interacts with PARP1; the interaction is increased following the formation of DNA double-strand breaks. Interacts (via C-terminus) with NUMA1. In terms of processing, phosphorylation at Ser-151 is required to promote stalled fork restart. As to expression, detected in ovary, but not in testis or somatic tissues. In the ovary, expressed in growing oocytes.

The protein resides in the cytoplasm. The protein localises to the cell cortex. It is found in the nucleus. Its subcellular location is the mitochondrion. It localises to the cytoskeleton. The protein resides in the microtubule organizing center. The protein localises to the centrosome. It is found in the chromosome. Its function is as follows. Component of the subcortical maternal complex (SCMC), a multiprotein complex that plays a key role in early embryonic development. The SCMC complex is a structural constituent of cytoplasmic lattices, which consist in fibrous structures found in the cytoplasm of oocytes and preimplantation embryos. They are required to store maternal proteins critical for embryonic development, such as proteins that control epigenetic reprogramming of the preimplantation embryo, and prevent their degradation or activation. KHDC3 ensures proper spindle assembly by regulating the localization of AURKA via RHOA signaling and of PLK1 via a RHOA-independent process. Required for the localization of MAD2L1 to kinetochores to enable spindle assembly checkpoint function. As part of the OOEP-KHDC3 scaffold, recruits BLM and TRIM25 to DNA replication forks, thereby promoting the ubiquitination of BLM by TRIM25, enhancing BLM retainment at replication forks and therefore promoting stalled replication fork restart. Regulates homologous recombination-mediated DNA repair via recruitment of RAD51 to sites of DNA double-strand breaks, and sustainment of PARP1 activity, which in turn modulates downstream ATM or ATR activation. Activation of ATM or ATR in response to DNA double-strand breaks may be cell-type specific. Its role in DNA double-strand break repair is independent of its role in restarting stalled replication forks. Promotes neural stem cell neurogenesis and neuronal differentiation in the hippocampus. May regulate normal development of learning, memory and anxiety. Capable of binding RNA. This chain is KH domain-containing protein 3, found in Mus musculus (Mouse).